The primary structure comprises 676 residues: Pescadillo homolog (676 aa).

The interval 277-296 (TIEGSNKQSNNSSNQEVSRD) is disordered. A compositionally biased stretch (low complexity) spans 281–291 (SNKQSNNSSNQ). Positions 351 to 467 (EAGALFAPFT…KLLRPDLYAP (117 aa)) constitute a BRCT domain. The disordered stretch occupies residues 471 to 676 (LPPHLSPWVK…RRKLEKTGEK (206 aa)). Over residues 494-519 (EQEEEGEAEMAGEEEEEESDEEMEEA) the composition is skewed to acidic residues. A compositionally biased stretch (basic and acidic residues) spans 520 to 531 (PETKKADAKADE). Composition is skewed to acidic residues over residues 532 to 541 (SESEDEDESV) and 548 to 581 (ADSD…DEEE). The stretch at 571–676 (EAASESEDEE…RRKLEKTGEK (106 aa)) forms a coiled coil. A compositionally biased stretch (basic and acidic residues) spans 582-592 (AARTQHQKELE). The span at 611 to 624 (KKKSSQAKKIAAKK) shows a compositional bias: basic residues. Basic and acidic residues predominate over residues 625-635 (RKEEEELERQK).

It belongs to the pescadillo family. Component of the NOP7 complex, composed of erb1, nop7 and ytm1. The complex is held together by erb1, which interacts with nop7 via its N-terminal domain and with ytm1 via a high-affinity interaction between the seven-bladed beta-propeller domains of the 2 proteins. The NOP7 complex associates with the 66S pre-ribosome.

The protein resides in the nucleus. It is found in the nucleolus. The protein localises to the nucleoplasm. Its function is as follows. Component of the NOP7 complex, which is required for maturation of the 25S and 5.8S ribosomal RNAs and formation of the 60S ribosome. In Aspergillus terreus (strain NIH 2624 / FGSC A1156), this protein is Pescadillo homolog (nop7).